The following is a 727-amino-acid chain: Cyclin-T1 (727 aa).

The residue at position 117 (serine 117) is a Phosphoserine. A Nuclear localization signal, and interaction with Tat-TAR RNA motif is present at residues lysine 253–aspartate 270. A compositionally biased stretch (low complexity) spans methionine 302–serine 322. Positions methionine 302–glycine 326 are disordered. Lysine 343 participates in a covalent cross-link: Glycyl lysine isopeptide (Lys-Gly) (interchain with G-Cter in SUMO2). Residues serine 386–leucine 427 are a coiled coil. Serine 390 is modified (phosphoserine). An N6-acetyllysine modification is found at lysine 392. Residue lysine 417 forms a Glycyl lysine isopeptide (Lys-Gly) (interchain with G-Cter in SUMO2) linkage. An ADP-ribosylserine mark is found at serine 418, serine 476, and serine 477. The tract at residues isoleucine 482–glutamine 552 is histidine-rich domain (HRD). Lysine 483 is covalently cross-linked (Glycyl lysine isopeptide (Lys-Gly) (interchain with G-Cter in SUMO2)). Over residues isoleucine 486–histidine 508 the composition is skewed to basic and acidic residues. Disordered regions lie at residues isoleucine 486 to alanine 591 and leucine 692 to lysine 727. Lysine 487 is subject to N6-(ADP-ribosyl)lysine. Histidine 489 bears the ADP-ribosylhistidine mark. Residues serine 497 and serine 501 each carry the phosphoserine modification. Residues lysine 509–histidine 532 show a composition bias toward basic residues. An ADP-ribosylhistidine modification is found at histidine 532. ADP-ribosylserine is present on residues serine 533, serine 551, and serine 554. Histidine 558 carries the post-translational modification ADP-ribosylhistidine. Positions serine 562 to serine 572 are enriched in low complexity. An ADP-ribosylserine modification is found at serine 565. The residue at position 566 (serine 566) is a Phosphoserine. The span at leucine 711–lysine 727 shows a compositional bias: pro residues.

It belongs to the cyclin family. Cyclin C subfamily. In terms of assembly, cyclin-T1 is the predominant cyclin that associates with CDK9 to form a heterodimer called P-TEFb. P-TEFb forms a complex with AFF4/AF5Q31. Component of a complex which is at least composed of HTATSF1/Tat-SF1, P-TEFb complex, RNA pol II, SUPT5H, and NCL/nucleolin. Component of the 7SK snRNP complex at least composed of P-TEFb (composed of CDK9 and CCNT1/cyclin-T1), HEXIM1, HEXIM2, BCDIN3, SART3 proteins and 7SK and U6 snRNAs. Interacts (via central region) with ZMYND8 (via N-terminus); the interaction is direct and the association appears to occur between homodimeric ZMYND8 and the activated form of the P-TEFb complex. Interacts with BRD4, targets chromatin binding. Interacts with JMJD6. Interacts with MDFIC. Interacts with HSF1. Interacts with HTATSF1. Interacts with TBX21. ADP-ribosylation on serine residues by PARP1 in response to DNA damage disrupts the phase separation activity of CCNT1, thereby preventing activation of CDK9.

It localises to the nucleus. Its function is as follows. Regulatory subunit of the cyclin-dependent kinase pair (CDK9/cyclin-T1) complex, also called positive transcription elongation factor B (P-TEFb), which facilitates the transition from abortive to productive elongation by phosphorylating the CTD (C-terminal domain) of the large subunit of RNA polymerase II (RNA Pol II). Required to activate the protein kinase activity of CDK9: acts by mediating formation of liquid-liquid phase separation (LLPS) that enhances binding of P-TEFb to the CTD of RNA Pol II. The polypeptide is Cyclin-T1 (CCNT1) (Equus caballus (Horse)).